The following is a 608-amino-acid chain: ATP-binding protein Uup (608 aa).

ABC transporter domains lie at 7-217 (APVL…AADA) and 285-512 (VEAK…FAPV). ATP is bound by residues 42 to 49 (GRNGAGKS) and 317 to 324 (GPNGAGKT). Residues 522–608 (AAPAAPKKSA…LEEKKENLAG (87 aa)) form a C-terminal domain (CTD), binds DNA region.

This sequence belongs to the ABC transporter superfamily. ABCF family. Uup subfamily.

It localises to the cytoplasm. The enzyme catalyses ATP + H2O = ADP + phosphate + H(+). Its function is as follows. Probably plays a role in ribosome assembly or function. May be involved in resolution of branched DNA intermediates that result from template switching in postreplication gaps. Binds DNA and has ATPase activity. In terms of biological role, one of a cluster of genes involved in attachment of the holdfast to the cell. The holdfast is a structure that allows the bacteria to firmly adhere to surfaces. This Caulobacter vibrioides (strain ATCC 19089 / CIP 103742 / CB 15) (Caulobacter crescentus) protein is ATP-binding protein Uup.